The following is a 353-amino-acid chain: Photosystem II D2 protein (353 aa).

T2 carries the N-acetylthreonine modification. T2 is subject to Phosphothreonine. A helical membrane pass occupies residues 41-61 (CAYFALGGWFTGTTFVTSWYT). Position 118 (H118) interacts with chlorophyll a. Residues 125–141 (GFMLRQFELARSVQLRP) form a helical membrane-spanning segment. Q130 and N143 together coordinate pheophytin a. A helical membrane pass occupies residues 153 to 166 (VFVSVFLIYPLGQS). H198 serves as a coordination point for chlorophyll a. The helical transmembrane segment at 208–228 (AALLCAIHGATVENTLFEDGD) threads the bilayer. Positions 215 and 262 each coordinate a plastoquinone. Position 215 (H215) interacts with Fe cation. H269 provides a ligand contact to Fe cation. A helical transmembrane segment spans residues 279 to 295 (GLWMSAIGVVGLALNLR).

Belongs to the reaction center PufL/M/PsbA/D family. In terms of assembly, PSII is composed of 1 copy each of membrane proteins PsbA, PsbB, PsbC, PsbD, PsbE, PsbF, PsbH, PsbI, PsbJ, PsbK, PsbL, PsbM, PsbT, PsbX, PsbY, PsbZ, Psb30/Ycf12, at least 3 peripheral proteins of the oxygen-evolving complex and a large number of cofactors. It forms dimeric complexes. Requires The D1/D2 heterodimer binds P680, chlorophylls that are the primary electron donor of PSII, and subsequent electron acceptors. It shares a non-heme iron and each subunit binds pheophytin, quinone, additional chlorophylls, carotenoids and lipids. There is also a Cl(-1) ion associated with D1 and D2, which is required for oxygen evolution. The PSII complex binds additional chlorophylls, carotenoids and specific lipids. as cofactor.

It localises to the plastid. The protein resides in the chloroplast thylakoid membrane. It carries out the reaction 2 a plastoquinone + 4 hnu + 2 H2O = 2 a plastoquinol + O2. Photosystem II (PSII) is a light-driven water:plastoquinone oxidoreductase that uses light energy to abstract electrons from H(2)O, generating O(2) and a proton gradient subsequently used for ATP formation. It consists of a core antenna complex that captures photons, and an electron transfer chain that converts photonic excitation into a charge separation. The D1/D2 (PsbA/PsbD) reaction center heterodimer binds P680, the primary electron donor of PSII as well as several subsequent electron acceptors. D2 is needed for assembly of a stable PSII complex. The protein is Photosystem II D2 protein of Oryza nivara (Indian wild rice).